Consider the following 166-residue polypeptide: MALKTDIRGMIWRYPDYFIVGREQCREFARAVKCDHPAFFSEEAAADLGYDALVAPLTFVTILAKYVQLDFFRHVDVGMETMQIVQVDQRFVFHKPVLAGDKLWARMDIHSVDERFGADIVVTRNLCTNDDGELVMEAYTTLMGQQGDGSARLKWDKESGQVIRTA.

It belongs to the UPF0336 family.

The protein is UPF0336 protein Mb0656 of Mycobacterium bovis (strain ATCC BAA-935 / AF2122/97).